A 1443-amino-acid polypeptide reads, in one-letter code: Cleavage and polyadenylation specificity factor subunit 1 (1443 aa).

Disordered regions lie at residues 404–435, 546–570, 715–777, and 901–921; these read PASAVREAADKEEPPSKKKRVDATAGWSAAGK, EEDNPKGEGTEQEPSTTPEADDDGR, GGAR…PAPF, and FREKKPKPSKKKAEGGGAEEG. A compositionally biased stretch (basic and acidic residues) spans 410 to 419; the sequence is EAADKEEPPS. 2 positions are modified to phosphoserine: Ser-756 and Ser-766. The segment covering 758–775 has biased composition (basic and acidic residues); that stretch reads SKEEARRSSQPPADRDPA. A Nuclear localization signal motif is present at residues 893–908; it reads KKVPHNINFREKKPKP.

The protein belongs to the CPSF1 family. As to quaternary structure, component of the cleavage and polyadenylation specificity factor (CPSF) complex, composed of CPSF1, CPSF2, CPSF3, CPSF4 and FIP1L1. Found in a complex with CPSF1, FIP1L1 and PAPOLA. Interacts with FIP1L1, TENT2/GLD2 and SRRM1. Interacts with TUT1; the interaction is direct and mediates the recruitment of the CPSF complex on the 3'UTR of selected pre-mRNAs. Post-translationally, the N-terminus is blocked. In terms of tissue distribution, widely expressed, with high expression in the retina.

The protein resides in the nucleus. Its subcellular location is the nucleoplasm. Its function is as follows. Component of the cleavage and polyadenylation specificity factor (CPSF) complex that plays a key role in pre-mRNA 3'-end formation, recognizing the AAUAAA signal sequence and interacting with poly(A) polymerase and other factors to bring about cleavage and poly(A) addition. This subunit is involved in the RNA recognition step of the polyadenylation reaction. May play a role in eye morphogenesis and the development of retinal ganglion cell projections to the midbrain. In Homo sapiens (Human), this protein is Cleavage and polyadenylation specificity factor subunit 1 (CPSF1).